The sequence spans 287 residues: Glutamate racemase (287 aa).

Residues 32–33 (DS) and 64–65 (YG) each bind substrate. The active-site Proton donor/acceptor is the cysteine 96. 97 to 98 (NT) lines the substrate pocket. Cysteine 208 acts as the Proton donor/acceptor in catalysis. 209–210 (TH) provides a ligand contact to substrate.

This sequence belongs to the aspartate/glutamate racemases family.

The enzyme catalyses L-glutamate = D-glutamate. Its pathway is cell wall biogenesis; peptidoglycan biosynthesis. Functionally, provides the (R)-glutamate required for cell wall biosynthesis. This Serratia proteamaculans (strain 568) protein is Glutamate racemase.